The chain runs to 226 residues: Ribose-5-phosphate isomerase A (226 aa).

Substrate is bound by residues 26 to 29, 82 to 85, and 95 to 98; these read TGST, DGAD, and KGGG. The active-site Proton acceptor is the E104. K122 contacts substrate.

This sequence belongs to the ribose 5-phosphate isomerase family. As to quaternary structure, homodimer.

The enzyme catalyses aldehydo-D-ribose 5-phosphate = D-ribulose 5-phosphate. It functions in the pathway carbohydrate degradation; pentose phosphate pathway; D-ribose 5-phosphate from D-ribulose 5-phosphate (non-oxidative stage): step 1/1. Functionally, catalyzes the reversible conversion of ribose-5-phosphate to ribulose 5-phosphate. This is Ribose-5-phosphate isomerase A from Streptococcus thermophilus (strain CNRZ 1066).